A 205-amino-acid polypeptide reads, in one-letter code: Dephospho-CoA kinase (205 aa).

Residues 7 to 204 (LVGLTGGIGS…ARYLAAARAT (198 aa)) form the DPCK domain. 15 to 20 (GSGKSA) contacts ATP.

It belongs to the CoaE family.

It localises to the cytoplasm. It catalyses the reaction 3'-dephospho-CoA + ATP = ADP + CoA + H(+). It functions in the pathway cofactor biosynthesis; coenzyme A biosynthesis; CoA from (R)-pantothenate: step 5/5. Its function is as follows. Catalyzes the phosphorylation of the 3'-hydroxyl group of dephosphocoenzyme A to form coenzyme A. In Aromatoleum aromaticum (strain DSM 19018 / LMG 30748 / EbN1) (Azoarcus sp. (strain EbN1)), this protein is Dephospho-CoA kinase.